The primary structure comprises 339 residues: Glutamyl-tRNA reductase (339 aa).

Substrate contacts are provided by residues 50–53 (TCHR), Ser102, 107–109 (ETE), and Gln113. The active-site Nucleophile is the Cys51. Position 181-186 (181-186 (GYSDIN)) interacts with NADP(+).

This sequence belongs to the glutamyl-tRNA reductase family. In terms of assembly, homodimer.

The enzyme catalyses (S)-4-amino-5-oxopentanoate + tRNA(Glu) + NADP(+) = L-glutamyl-tRNA(Glu) + NADPH + H(+). Its pathway is porphyrin-containing compound metabolism; protoporphyrin-IX biosynthesis; 5-aminolevulinate from L-glutamyl-tRNA(Glu): step 1/2. Its function is as follows. Catalyzes the NADPH-dependent reduction of glutamyl-tRNA(Glu) to glutamate 1-semialdehyde (GSA). The sequence is that of Glutamyl-tRNA reductase from Chlamydia pneumoniae (Chlamydophila pneumoniae).